The sequence spans 42 residues: Photosystem I reaction center subunit IX (42 aa).

The chain crosses the membrane as a helical span at residues 7–27 (YLSTAPVLAAIWFGILAGLLI).

Belongs to the PsaJ family.

The protein localises to the plastid. Its subcellular location is the chloroplast thylakoid membrane. In terms of biological role, may help in the organization of the PsaE and PsaF subunits. The protein is Photosystem I reaction center subunit IX of Staurastrum punctulatum (Green alga).